The sequence spans 63 residues: Large ribosomal subunit protein uL30 (63 aa).

Belongs to the universal ribosomal protein uL30 family. In terms of assembly, part of the 50S ribosomal subunit.

The chain is Large ribosomal subunit protein uL30 from Xylella fastidiosa (strain 9a5c).